The following is a 93-amino-acid chain: MTAEEKSVLSLFMIGVLIVVGKVLAGGEPITPRLFIGRMLLGGFVSMVAGVVLVQFPDLSLPAVCGIGSMLGIAGYQVIEIAIQRRFKGRGKQ.

Residues 1 to 6 (MTAEEK) are Periplasmic-facing. The chain crosses the membrane as a helical span at residues 7 to 27 (SVLSLFMIGVLIVVGKVLAGG). Residues 28–33 (EPITPR) lie on the Cytoplasmic side of the membrane. The chain crosses the membrane as a helical span at residues 34–54 (LFIGRMLLGGFVSMVAGVVLV). Residues 55–62 (QFPDLSLP) are Periplasmic-facing. Residues 63–83 (AVCGIGSMLGIAGYQVIEIAI) form a helical membrane-spanning segment. Residues 84–93 (QRRFKGRGKQ) are Cytoplasmic-facing.

It belongs to the P2likevirus holin family. As to quaternary structure, homomultimer. Interacts with antiholin; this interaction blocks the holin homomultimerization and delays host cell lysis.

It localises to the host cell inner membrane. Its function is as follows. Accumulates harmlessly in the cytoplasmic membrane until it reaches a critical concentration that triggers the formation of micron-scale pores (holes) causing host cell membrane disruption and endolysin escape into the periplasmic space. Determines the precise timing of host cell lysis. Participates with the endolysin and spanin proteins in the sequential events which lead to the programmed host cell lysis releasing the mature viral particles from the host cell. The chain is Holin (Y) from Enterobacteriaceae (Bacteriophage P2).